Here is a 520-residue protein sequence, read N- to C-terminus: Probable methylmalonate-semialdehyde/malonate-semialdehyde dehydrogenase [acylating], mitochondrial (520 aa).

NAD(+)-binding residues include alanine 169, phenylalanine 171, lysine 195, glutamate 198, arginine 199, and serine 248. Cysteine 303 acts as the Nucleophile in catalysis. Residue glutamate 403 participates in NAD(+) binding.

The protein belongs to the aldehyde dehydrogenase family. In terms of assembly, homotetramer.

It is found in the mitochondrion. It carries out the reaction 2-methyl-3-oxopropanoate + NAD(+) + CoA + H2O = propanoyl-CoA + hydrogencarbonate + NADH + H(+). It catalyses the reaction 3-oxopropanoate + NAD(+) + CoA + H2O = hydrogencarbonate + acetyl-CoA + NADH + H(+). Functionally, probable malonate and methylmalonate semialdehyde dehydrogenase involved in the catabolism of valine, thymine, and compounds catabolized by way of beta-alanine, including uracil and cytidine. The polypeptide is Probable methylmalonate-semialdehyde/malonate-semialdehyde dehydrogenase [acylating], mitochondrial (Drosophila pseudoobscura pseudoobscura (Fruit fly)).